A 311-amino-acid chain; its full sequence is MAAARAPRALTSASPGSGKAKLTHPGKAILAGGLAGGIEICITFPTEYVKTQLQLDERSHPPRYRGIGDCVRQTVRSHGLLGLYRGLSSLLYGSIPKAAVRFGTFEFLSNHMRDAQGRLDSTRGLLCGLGAGVPEAVVVVCPMETIKVKFIHDQTSASPKYRGFFHGVREIVREQGLKGTYQGLTATVLKQGSNQGIRFFVMTSLRNWYRGDNPNKPMNPLITGVFGAIAGAASVFGNTPLDVIKTRMQGLEAHKYRNTLDCGLQILRNEGLKAFYKGTVPRLGRVCLDVAIVFIIYDEVVKLLNKVWKAD.

Residues Met-1–Ala-13 constitute a propeptide, removed in mature form. Over residues Met-1–Pro-15 the composition is skewed to low complexity. The tract at residues Met-1 to Leu-22 is disordered. Solcar repeat units follow at residues Thr-23–His-111, Thr-122–Trp-208, and Met-218–Leu-303. 3 helical membrane-spanning segments follow: residues Ile-29–Thr-46, Gly-86–Phe-105, and Leu-129–Met-143. Ser-156 carries the phosphoserine modification. Transmembrane regions (helical) follow at residues Gly-183–Met-202, Gly-224–Leu-241, and Gly-278–Tyr-297.

The protein belongs to the mitochondrial carrier (TC 2.A.29) family. Post-translationally, possesses a short cleavable presequence, which, however, is found to be dispensable both for targeting to mitochondria and insertion into the inner membrane. However, the presequence is required to keep SLC25A1 in a soluble state and thus in an import-competent state. Mature SLC25A1 lacking the presequence is prone to aggregation.

The protein resides in the mitochondrion inner membrane. Its subcellular location is the mitochondrion membrane. It carries out the reaction (S)-malate(in) + citrate(out) = (S)-malate(out) + citrate(in). The catalysed reaction is D-threo-isocitrate(in) + citrate(out) = D-threo-isocitrate(out) + citrate(in). It catalyses the reaction citrate(out) + succinate(in) = citrate(in) + succinate(out). The enzyme catalyses phosphoenolpyruvate(in) + citrate(out) = phosphoenolpyruvate(out) + citrate(in). It carries out the reaction cis-aconitate(in) + citrate(out) = cis-aconitate(out) + citrate(in). The catalysed reaction is trans-aconitate(in) + citrate(out) = trans-aconitate(out) + citrate(in). It catalyses the reaction maleate(in) + citrate(out) = maleate(out) + citrate(in). Mitochondrial electroneutral antiporter that exports citrate from the mitochondria into the cytosol in exchange for malate. Also able to mediate the exchange of citrate for isocitrate, phosphoenolpyruvate, cis-aconitate and to a lesser extent trans-aconitate, maleate and succinate. In the cytoplasm, citrate plays important roles in fatty acid and sterol synthesis, regulation of glycolysis, protein acetylation, and other physiopathological processes. The chain is Tricarboxylate transport protein, mitochondrial (SLC25A1) from Bos taurus (Bovine).